We begin with the raw amino-acid sequence, 172 residues long: Cystatin-like cysteine protease inhibitor EPIC4 (172 aa).

The signal sequence occupies residues 1 to 17; it reads MRASLSILVAFPALAAA. The short motif at 71–75 is the Secondary area of contact element; sequence QVVAG. The interval 129-172 is disordered; sequence EAATASSSSTPAPTPASTSTSASSSEETMLQSSVQQRAMFSDFV. A compositionally biased stretch (low complexity) spans 130-156; sequence AATASSSSTPAPTPASTSTSASSSEET. Over residues 157–166 the composition is skewed to polar residues; sequence MLQSSVQQRA.

This sequence belongs to the cystatin family.

Its subcellular location is the secreted. Its function is as follows. Secreted effector that interacts with and inhibits host apoplastic pathogenesis-related papain-like cysteine proteases. Inhibition of host proteases by a pathogen extracellular protease inhibitor forms a specific type of defense-counterdefense mechanism between plants and microbial pathogens. The chain is Cystatin-like cysteine protease inhibitor EPIC4 from Phytophthora infestans (Potato late blight agent).